Reading from the N-terminus, the 502-residue chain is Probable cytosol aminopeptidase (502 aa).

Mn(2+) is bound by residues Lys-254 and Asp-259. Lys-266 is a catalytic residue. The Mn(2+) site is built by Asp-277, Asp-336, and Glu-338. Arg-340 is a catalytic residue.

Belongs to the peptidase M17 family. Mn(2+) serves as cofactor.

The protein localises to the cytoplasm. It carries out the reaction Release of an N-terminal amino acid, Xaa-|-Yaa-, in which Xaa is preferably Leu, but may be other amino acids including Pro although not Arg or Lys, and Yaa may be Pro. Amino acid amides and methyl esters are also readily hydrolyzed, but rates on arylamides are exceedingly low.. The catalysed reaction is Release of an N-terminal amino acid, preferentially leucine, but not glutamic or aspartic acids.. In terms of biological role, presumably involved in the processing and regular turnover of intracellular proteins. Catalyzes the removal of unsubstituted N-terminal amino acids from various peptides. This is Probable cytosol aminopeptidase from Tropheryma whipplei (strain TW08/27) (Whipple's bacillus).